We begin with the raw amino-acid sequence, 818 residues long: MSLWPFGETLSHSGIDSILEEYYLIFRSLEGNETSSTDDKKNEPSMESESEFGTESRDRSDLNQSFIDRILLETALLDELNGAANDRLVDFICLGYFYDDRSQQVRHMDYLVDMLMAYLKDIDRTGYRTPFLLENSFHQTGEYEDQDDEDPMLYVNIISSIFCSKSAPIVEALVQNTPFLSSLFEVFQFENIEAENCPILAVFLKINETLLFEQTSSYLEFFKSQPNIVDKFLYHIEVSPLVEFLIKIMLTDQVESPTNIIDFLYHQDLIPKCLNLLENSKYSPGIQNSSGELLKALISISTNFKLDTLWIGPNRLTRQLASPQYVDQLINIILFQRGHAMGVAVSIIIELIRKNNSDYDEVDLLSTTIVDNPPSQRDPVYLGHLLYELTMHMEDFYALLIKLENDDDDDHDTASKALPSVKHHLLENQLHESFRPLGFERVKITELISEMLHCSNMGLMNSKRGEKIARTRDKCRDTLDQNSLEKAMKNLNINDNTITSNTLEDKCNNNDSNDSNDNQKQKKNIKKKFHDNELYSTFDTSDDNIDDDDDMSFEIPYVSETQNLKIRKNPTIGDLFKIKLHDLGFFPKFLQLFLRYPWNNFWHNIVFDIIQQIFNGRMDFSYNSFLVYSLFDFKKSTRFIPKPLYGSNQKLPVKDFHIISDFILQGHKDSFEFYEKEKTNLGYMGQLVLIAEEIAKYSKIYKTDLIAPDIYAFLQDEVWMSYSSDILNETRTMCSIILGGGQFCAESDENTNQDFLEKADMSKPAHPSTMDENEIVHEEDVKLHDKVAELIDELGQLTELDIHDKIKDVIVDHHSDLN.

2 disordered regions span residues 33 to 60 (ETSSTDDKKNEPSMESESEFGTESRDRS) and 499 to 526 (TSNTLEDKCNNNDSNDSNDNQKQKKNIK). Low complexity predominate over residues 509–518 (NNDSNDSNDN).

The protein belongs to the SAPS family. Post-translationally, hyperphosphorylated in the absence of SIT4.

Associates with the SIT4 phosphatase in a cell cycle dependent manner. May be directly or indirectly involved in SIT4-dependent functions in budding and in normal G1 cyclin expression. The protein is SIT4-associating protein SAP4 (SAP4) of Saccharomyces cerevisiae (strain ATCC 204508 / S288c) (Baker's yeast).